The following is a 416-amino-acid chain: Isobutyryl-CoA dehydrogenase, mitochondrial (416 aa).

The N-terminal 23 residues, Met1 to Gly23, are a transit peptide targeting the mitochondrion. Residue Lys51 is modified to N6-acetyllysine; alternate. Lys51 carries the N6-succinyllysine; alternate modification. FAD is bound by residues Tyr159–Ser168 and Phe192–Ser194. A substrate-binding site is contributed by Ser168. The residue at position 232 (Lys232) is an N6-acetyllysine. An N6-succinyllysine modification is found at Lys272. Asn275–Arg278 is a binding site for substrate. FAD-binding positions include Arg303, Ser313–Gln314, and Gln372–Gly376. The active-site Proton acceptor is Glu399. An FAD-binding site is contributed by Ser401–Glu403. Arg411 serves as a coordination point for substrate.

This sequence belongs to the acyl-CoA dehydrogenase family. In terms of assembly, homotetramer, formed by a dimer of dimers. FAD is required as a cofactor.

The protein localises to the mitochondrion. The enzyme catalyses 2-methylpropanoyl-CoA + oxidized [electron-transfer flavoprotein] + H(+) = 2-methylpropenoyl-CoA + reduced [electron-transfer flavoprotein]. It carries out the reaction (2S)-2-methylbutanoyl-CoA + oxidized [electron-transfer flavoprotein] + H(+) = (2E)-2-methylbut-2-enoyl-CoA + reduced [electron-transfer flavoprotein]. The catalysed reaction is propanoyl-CoA + oxidized [electron-transfer flavoprotein] + H(+) = acryloyl-CoA + reduced [electron-transfer flavoprotein]. Its pathway is amino-acid degradation; L-valine degradation. Functionally, isobutyryl-CoA dehydrogenase which catalyzes the conversion of 2-methylpropanoyl-CoA to (2E)-2-methylpropenoyl-CoA in the valine catabolic pathway. To a lesser extent, also able to catalyze the oxidation of (2S)-2-methylbutanoyl-CoA. This chain is Isobutyryl-CoA dehydrogenase, mitochondrial (ACAD8), found in Bos taurus (Bovine).